A 258-amino-acid chain; its full sequence is Phosphoadenosine 5'-phosphosulfate reductase (258 aa).

The Nucleophile; cysteine thiosulfonate intermediate role is filled by cysteine 244.

Belongs to the PAPS reductase family. CysH subfamily.

It is found in the cytoplasm. It carries out the reaction [thioredoxin]-disulfide + sulfite + adenosine 3',5'-bisphosphate + 2 H(+) = [thioredoxin]-dithiol + 3'-phosphoadenylyl sulfate. Its pathway is sulfur metabolism; hydrogen sulfide biosynthesis; sulfite from sulfate: step 3/3. Its function is as follows. Catalyzes the formation of sulfite from phosphoadenosine 5'-phosphosulfate (PAPS) using thioredoxin as an electron donor. This chain is Phosphoadenosine 5'-phosphosulfate reductase, found in Vibrio vulnificus (strain CMCP6).